A 1271-amino-acid chain; its full sequence is DNA-directed RNA polymerase subunit beta (1271 aa).

This sequence belongs to the RNA polymerase beta chain family. The RNAP catalytic core consists of 2 alpha, 1 beta, 1 beta' and 1 omega subunit. When a sigma factor is associated with the core the holoenzyme is formed, which can initiate transcription.

The enzyme catalyses RNA(n) + a ribonucleoside 5'-triphosphate = RNA(n+1) + diphosphate. Its function is as follows. DNA-dependent RNA polymerase catalyzes the transcription of DNA into RNA using the four ribonucleoside triphosphates as substrates. In Acholeplasma laidlawii (strain PG-8A), this protein is DNA-directed RNA polymerase subunit beta.